A 335-amino-acid chain; its full sequence is tRNA N6-adenosine threonylcarbamoyltransferase (335 aa).

Fe cation-binding residues include histidine 111 and histidine 115. Residues 133–137 (LISGG), aspartate 166, glycine 179, and asparagine 276 contribute to the substrate site. Aspartate 301 lines the Fe cation pocket.

The protein belongs to the KAE1 / TsaD family. It depends on Fe(2+) as a cofactor.

The protein localises to the cytoplasm. The catalysed reaction is L-threonylcarbamoyladenylate + adenosine(37) in tRNA = N(6)-L-threonylcarbamoyladenosine(37) in tRNA + AMP + H(+). Its function is as follows. Required for the formation of a threonylcarbamoyl group on adenosine at position 37 (t(6)A37) in tRNAs that read codons beginning with adenine. Is involved in the transfer of the threonylcarbamoyl moiety of threonylcarbamoyl-AMP (TC-AMP) to the N6 group of A37, together with TsaE and TsaB. TsaD likely plays a direct catalytic role in this reaction. This chain is tRNA N6-adenosine threonylcarbamoyltransferase, found in Wolbachia sp. subsp. Brugia malayi (strain TRS).